We begin with the raw amino-acid sequence, 235 residues long: Purine nucleoside phosphorylase DeoD-type (235 aa).

His-4 is an a purine D-ribonucleoside binding site. Residues Gly-20, Arg-24, Arg-43, and Arg-87–Thr-90 each bind phosphate. A purine D-ribonucleoside contacts are provided by residues Glu-179–Glu-181 and Ser-203–Asp-204. The active-site Proton donor is Asp-204.

It belongs to the PNP/UDP phosphorylase family. Homohexamer; trimer of homodimers.

It carries out the reaction a purine D-ribonucleoside + phosphate = a purine nucleobase + alpha-D-ribose 1-phosphate. The catalysed reaction is a purine 2'-deoxy-D-ribonucleoside + phosphate = a purine nucleobase + 2-deoxy-alpha-D-ribose 1-phosphate. Catalyzes the reversible phosphorolytic breakdown of the N-glycosidic bond in the beta-(deoxy)ribonucleoside molecules, with the formation of the corresponding free purine bases and pentose-1-phosphate. The protein is Purine nucleoside phosphorylase DeoD-type of Clostridium perfringens (strain SM101 / Type A).